We begin with the raw amino-acid sequence, 61 residues long: Large ribosomal subunit protein uL30 (61 aa).

It belongs to the universal ribosomal protein uL30 family. In terms of assembly, part of the 50S ribosomal subunit.

This chain is Large ribosomal subunit protein uL30, found in Chlorobium luteolum (strain DSM 273 / BCRC 81028 / 2530) (Pelodictyon luteolum).